Consider the following 207-residue polypeptide: MEGESTAVNITETPKERKGKAPLLAPPPASGGIKTIVQKAPKGGYKRGLAVFDVVLRIAGIAAALGAVIAMGSTDQTLPFFTQFFQFKAEFDDLPVFTFFVIANAITAAYLALSIPISIVCIIRPHLVGPRVLLTFLDTVMVGLTTAAAGGAASIVYLAHNGNSDANWPAICQQFNDFCQEVSGAVVASFITVVVLMFLIVLSAFSL.

A compositionally biased stretch (polar residues) spans 1–12; that stretch reads MEGESTAVNITE. The disordered stretch occupies residues 1–24; that stretch reads MEGESTAVNITETPKERKGKAPLL. The Cytoplasmic portion of the chain corresponds to 1–48; sequence MEGESTAVNITETPKERKGKAPLLAPPPASGGIKTIVQKAPKGGYKRG. Residues 49–69 traverse the membrane as a helical segment; it reads LAVFDVVLRIAGIAAALGAVI. Residues 70–98 are Extracellular-facing; that stretch reads AMGSTDQTLPFFTQFFQFKAEFDDLPVFT. A helical membrane pass occupies residues 99–119; the sequence is FFVIANAITAAYLALSIPISI. Residues 120–138 lie on the Cytoplasmic side of the membrane; it reads VCIIRPHLVGPRVLLTFLD. Residues 139–159 traverse the membrane as a helical segment; the sequence is TVMVGLTTAAAGGAASIVYLA. The Extracellular portion of the chain corresponds to 160-184; sequence HNGNSDANWPAICQQFNDFCQEVSG. The helical transmembrane segment at 185 to 205 threads the bilayer; that stretch reads AVVASFITVVVLMFLIVLSAF. Residues 206-207 are Cytoplasmic-facing; that stretch reads SL.

It belongs to the Casparian strip membrane proteins (CASP) family. In terms of assembly, homodimer and heterodimers.

The protein localises to the cell membrane. Regulates membrane-cell wall junctions and localized cell wall deposition. Required for establishment of the Casparian strip membrane domain (CSD) and the subsequent formation of Casparian strips, a cell wall modification of the root endodermis that determines an apoplastic barrier between the intraorganismal apoplasm and the extraorganismal apoplasm and prevents lateral diffusion. The protein is Casparian strip membrane protein 1 of Taraxacum kok-saghyz (Russian dandelion).